A 306-amino-acid polypeptide reads, in one-letter code: MINPIYLILADFFDRYIGEPPEKVHPVVFIGKLISFFENVFKSTNSVNKNRDLLFGFLNVVLVLAIVFFMAFEIEQAINSISNSYIRISLYSIILSFSIGHKSLIEFSKSPIKFIVNNDLESAKKSVQCIVSRNTNELDKKHVLSASIESASENITDSIIAPLIYAAIFGLPGAFLYRAVNTFDAMIGYKSEKYLYYGKTAAYLDDILNFIPSRIAGMLLIISAPFYGGNVKSALLGYFNEGSKTPSPNSGYTMATLANSLSMELEKIGYYKLGKGEITVEKALNSLKAVDYSVLLFLIIYMILFM.

5 consecutive transmembrane segments (helical) span residues 54-74 (LFGFLNVVLVLAIVFFMAFEI), 88-108 (ISLYSIILSFSIGHKSLIEFS), 155-175 (ITDSIIAPLIYAAIFGLPGAF), 207-227 (ILNFIPSRIAGMLLIISAPFY), and 286-306 (SLKAVDYSVLLFLIIYMILFM).

It belongs to the CobD/CbiB family.

It is found in the cell membrane. The protein operates within cofactor biosynthesis; adenosylcobalamin biosynthesis. Its function is as follows. Converts cobyric acid to cobinamide by the addition of aminopropanol on the F carboxylic group. The chain is Probable cobalamin biosynthesis protein CobD from Methanococcus maripaludis (strain DSM 14266 / JCM 13030 / NBRC 101832 / S2 / LL).